Reading from the N-terminus, the 470-residue chain is MSLIEAAKHFTRAFAKARDLKFGSDARDHLLLGVEKLADAVVSTLGPKGRNVMIELPYGPPKVTKDGVTVAKSIEFKDKWQNLGAQLVINVAQKTNDVAGDGTTTATLLTRELYRESIKALSAGLDPNKVRKGMTLRVDAVVKELEKSTKKVSSPDEIFNVATISANGSEKIGHLIADAFKAVGNEGVITVAMGKKFDHELETVQGMKIDRGYISSYFQNDTKSMKCEYENPYILITDIKINSFAQIAPILEKIITTGRPLLIIADDVEGDALATLIVNKIRGSLKVVAIRAPGFGDNKKNTLQDIAVATGGQYISEELGLKLEEATQQMLGQCNKITVSKDDCIILGGAGDKDAMKARSEDIKKQLSNTQSKYETDKLRERLAKLTGGVAVISVGGANEVEVGEEKDLIDDALNATRAAIEEGIVAGGGTALLRASAVLEPLKKDKGLEERTGIEIIQNSHQTASHSHC.

This sequence belongs to the chaperonin (HSP60) family.

Its subcellular location is the hydrogenosome. Functionally, implicated in hydrogenosomal protein import and macromolecular assembly. May facilitate the correct folding of imported proteins. May also prevent misfolding and promote the refolding and proper assembly of unfolded polypeptides generated under stress conditions in the hydrogenosome (Potential). The sequence is that of Hydrogenosomal chaperonin HSP60 (HSP60) from Trichomonas vaginalis.